The chain runs to 145 residues: Large ribosomal subunit protein uL13 (145 aa).

The protein belongs to the universal ribosomal protein uL13 family. In terms of assembly, part of the 50S ribosomal subunit.

This protein is one of the early assembly proteins of the 50S ribosomal subunit, although it is not seen to bind rRNA by itself. It is important during the early stages of 50S assembly. In Staphylococcus saprophyticus subsp. saprophyticus (strain ATCC 15305 / DSM 20229 / NCIMB 8711 / NCTC 7292 / S-41), this protein is Large ribosomal subunit protein uL13.